The sequence spans 459 residues: Ribulose bisphosphate carboxylase large chain (459 aa).

An N6,N6,N6-trimethyllysine modification is found at lysine 4. Residues asparagine 113 and threonine 163 each coordinate substrate. Catalysis depends on lysine 165, which acts as the Proton acceptor. Position 167 (lysine 167) interacts with substrate. Mg(2+) contacts are provided by lysine 191, aspartate 193, and glutamate 194. Lysine 191 is subject to N6-carboxylysine. The active-site Proton acceptor is the histidine 284. Substrate-binding residues include arginine 285, histidine 317, and serine 369.

This sequence belongs to the RuBisCO large chain family. Type I subfamily. In terms of assembly, heterohexadecamer of 8 large chains and 8 small chains; disulfide-linked. The disulfide link is formed within the large subunit homodimers. It depends on Mg(2+) as a cofactor. Post-translationally, the disulfide bond which can form in the large chain dimeric partners within the hexadecamer appears to be associated with oxidative stress and protein turnover.

It localises to the plastid. It is found in the chloroplast. The enzyme catalyses 2 (2R)-3-phosphoglycerate + 2 H(+) = D-ribulose 1,5-bisphosphate + CO2 + H2O. It catalyses the reaction D-ribulose 1,5-bisphosphate + O2 = 2-phosphoglycolate + (2R)-3-phosphoglycerate + 2 H(+). Its function is as follows. RuBisCO catalyzes two reactions: the carboxylation of D-ribulose 1,5-bisphosphate, the primary event in carbon dioxide fixation, as well as the oxidative fragmentation of the pentose substrate in the photorespiration process. Both reactions occur simultaneously and in competition at the same active site. The sequence is that of Ribulose bisphosphate carboxylase large chain from Nyssa ogeche (Ogeechee tupelo).